A 279-amino-acid polypeptide reads, in one-letter code: Thioredoxin domain-containing protein plp1 (279 aa).

The span at 56–70 shows a compositional bias: basic and acidic residues; it reads RKEDTQDYNEPELHN. Positions 56–75 are disordered; the sequence is RKEDTQDYNEPELHNSNDPT. The Thioredoxin domain occupies 137 to 248; the sequence is FLTVENEREV…LEFRLLKSSA (112 aa). A compositionally biased stretch (basic and acidic residues) spans 254–267; sequence EESSSNKSIYHDEL. The disordered stretch occupies residues 254–279; sequence EESSSNKSIYHDELQNNQSDDSDFFE. Residues S272 and S275 each carry the phosphoserine modification.

It belongs to the phosducin family.

Its subcellular location is the cytoplasm. The protein localises to the nucleus. In terms of biological role, inhibits early G-protein signaling events following pheromone stimulation. May help create heterodimerizable beta-tubulin by facilitating the efficient transfer of nascent beta-tubulin polypeptides to the folding apparatus. The sequence is that of Thioredoxin domain-containing protein plp1 (plp1) from Schizosaccharomyces pombe (strain 972 / ATCC 24843) (Fission yeast).